The following is a 600-amino-acid chain: Methylenetetrahydrofolate reductase 2 (600 aa).

Glu22 (proton donor/acceptor) is an active-site residue. NAD(+) is bound by residues 22-27 and 54-55; these read EYFVPK and TW. FAD-binding positions include 54-55, His84, 114-116, 133-134, Tyr156, Asp171, and Lys178; these read TW, RGD, and YA. Asp116 contributes to the substrate binding site. Residues Gln189 and Tyr282 each coordinate substrate.

It belongs to the methylenetetrahydrofolate reductase family. Requires FAD as cofactor.

It catalyses the reaction (6S)-5-methyl-5,6,7,8-tetrahydrofolate + NADP(+) = (6R)-5,10-methylene-5,6,7,8-tetrahydrofolate + NADPH + H(+). The protein operates within one-carbon metabolism; tetrahydrofolate interconversion. This chain is Methylenetetrahydrofolate reductase 2 (MET13), found in Saccharomyces cerevisiae (strain ATCC 204508 / S288c) (Baker's yeast).